A 63-amino-acid polypeptide reads, in one-letter code: MATPKAKVSKSRRDKRRAQFTARSKAAVTTICPNCGEPTLSHRACRHCGQYRGRVVTKKSANG.

The disordered stretch occupies residues 1–23 (MATPKAKVSKSRRDKRRAQFTAR). Positions 7-18 (KVSKSRRDKRRA) are enriched in basic residues.

The protein belongs to the bacterial ribosomal protein bL32 family.

This Prosthecochloris aestuarii (strain DSM 271 / SK 413) protein is Large ribosomal subunit protein bL32.